Consider the following 517-residue polypeptide: MNGDISHPRGSGPGNLGSLEETLQQMNTLIKENRDLKEALKQTNLSMKERFEGLSAWKEKQKEERDFLEQRLEEARTRLNTMDVENEALKNQVKELEKSGAECLHTELEALRGQILRIQAEKNDLVAMNSELQLKMGQGSPSNSFIEIRIADDDLKVTKDLSSVPEASAFSMPKAESEEQTVRQLLRSLRAETDEKERLQLTLQEARGRIAELESKLEHADSSAQTSLPSAAETNASTEVKNLEDQLLKLCNELKQAQIKLDEAESMKRNLQDRCKDLEQDLGTLKTQLGDKQKVQAENDCLKVQMESLQAAIKLEQKKTQDEKNNLNQLKDAYTKLFEDYSELQEEKKKRESCVSKDDYDELQTRFATAEKALADKQQKIDEMKMELFQKEKDLETISVFQAQAEIYSSDFYAERAAREKIHEEKERLATQLEYVKKQNSQLQEEMESLGRHSMSEMQRRHVPRGANPQGPTAPNNLPGGRGEWQQQNIPDHACPKCGEVLPDLDSLQIHIMDCII.

Coiled-coil stretches lie at residues 15 to 127 and 174 to 453; these read NLGS…DLVA and KAES…LGRH. Disordered regions lie at residues 216 to 237 and 454 to 488; these read KLEH…TNAS and SMSE…WQQQ. Polar residues predominate over residues 222-237; sequence SSAQTSLPSAAETNAS. The segment at 487–517 adopts a CCHC NOA-type zinc-finger fold; sequence QQNIPDHACPKCGEVLPDLDSLQIHIMDCII. Cys-495, Cys-498, His-511, and Cys-515 together coordinate Zn(2+).

It is found in the cytoplasm. It localises to the perinuclear region. Its subcellular location is the golgi apparatus. The protein localises to the trans-Golgi network. The protein resides in the cytoplasmic vesicle. It is found in the recycling endosome. It localises to the autophagosome. In terms of biological role, probably part of the TNF-alpha signaling pathway that can shift the equilibrium toward induction of cell death. May act by regulating membrane trafficking and cellular morphogenesis. In Danio rerio (Zebrafish), this protein is Optineurin (optn).